The chain runs to 445 residues: 3-phosphoshikimate 1-carboxyvinyltransferase (445 aa).

The segment at 1 to 25 (MTDSNQPMPLQARKSGALHGTARVP) is disordered. 3 residues coordinate 3-phosphoshikimate: Lys28, Ser29, and Arg33. Lys28 serves as a coordination point for phosphoenolpyruvate. The phosphoenolpyruvate site is built by Gly101 and Arg129. Residues Ser175, Gln177, Asp328, and Lys355 each contribute to the 3-phosphoshikimate site. Phosphoenolpyruvate is bound at residue Gln177. Asp328 acts as the Proton acceptor in catalysis. Positions 359 and 402 each coordinate phosphoenolpyruvate.

It belongs to the EPSP synthase family. As to quaternary structure, monomer.

The protein resides in the cytoplasm. It carries out the reaction 3-phosphoshikimate + phosphoenolpyruvate = 5-O-(1-carboxyvinyl)-3-phosphoshikimate + phosphate. The protein operates within metabolic intermediate biosynthesis; chorismate biosynthesis; chorismate from D-erythrose 4-phosphate and phosphoenolpyruvate: step 6/7. In terms of biological role, catalyzes the transfer of the enolpyruvyl moiety of phosphoenolpyruvate (PEP) to the 5-hydroxyl of shikimate-3-phosphate (S3P) to produce enolpyruvyl shikimate-3-phosphate and inorganic phosphate. The protein is 3-phosphoshikimate 1-carboxyvinyltransferase of Rhodopseudomonas palustris (strain ATCC BAA-98 / CGA009).